The chain runs to 361 residues: G-protein coupled receptor 52 (361 aa).

Over 1 to 44 the chain is Extracellular; the sequence is MNDSRWTEWRILNTSSGILNVSERHSCPLGFGHYSAVDVCIFET. Asn2, Asn13, and Asn20 each carry an N-linked (GlcNAc...) asparagine glycan. A helical membrane pass occupies residues 45 to 65; it reads IVIVLLTFLIIAGNLTVIFVF. At 66–87 the chain is on the cytoplasmic side; it reads HCAPLLHHYTTSYFIQTMAYAD. The chain crosses the membrane as a helical span at residues 88–108; it reads LFVGVSCLVPTLSLLHYSTGI. At 109-115 the chain is on the extracellular side; sequence HESLTCQ. A disulfide bond links Cys114 and Cys193. A helical membrane pass occupies residues 116-136; it reads VFGYIISVLKSVSMACLACIS. The Cytoplasmic portion of the chain corresponds to 137-159; sequence VDRYLAITKPLSYNQLVTPCRLR. The helical transmembrane segment at 160 to 180 threads the bilayer; the sequence is ICIILIWIYSCLIFLPSFFGW. Over 181-200 the chain is Extracellular; that stretch reads GKPGYHGDIFEWCATSWLTS. The chain crosses the membrane as a helical span at residues 201–221; it reads AYFTGFIVCLLYAPAALVVCF. Topologically, residues 222-265 are cytoplasmic; the sequence is TYFHIFKICRQHTKEINDRRARFPSHEAAASRDAGHSPDRRYAM. Residues 266-286 form a helical membrane-spanning segment; sequence VLFRITSVFYMLWLPYIIYFL. Residues 287-296 lie on the Extracellular side of the membrane; the sequence is LESSRVLDNP. The helical transmembrane segment at 297–317 threads the bilayer; the sequence is TLSFLTTWLAISNSFCNCVIY. Residues 318–361 lie on the Cytoplasmic side of the membrane; the sequence is SLSNSVFRLGLRRLSETMCTSCMCVKDKEARDPKPRKRANSCSI.

Belongs to the G-protein coupled receptor 1 family.

The protein localises to the cell membrane. Its function is as follows. G- protein coupled receptor activated by antipsychotics reserpine leading to an increase in intracellular cAMP and its internalization. May play a role in locomotor activity through modulation of dopamine, NMDA and ADORA2A-induced locomotor activity. These behavioral changes are accompanied by modulation of the dopamine receptor signaling pathway in striatum. Modulates HTT level via cAMP-dependent but PKA independent mechanisms throught activation of RAB39B that translocates HTT to the endoplasmic reticulum, thus avoiding proteasome degradation. This is G-protein coupled receptor 52 from Bos taurus (Bovine).